The following is a 973-amino-acid chain: Putative cell agglutination protein pfl3 (973 aa).

An N-terminal signal peptide occupies residues 1-24 (MSLFPQILLRLLFLAFTLKSTSNA). N-linked (GlcNAc...) asparagine glycans are attached at residues Asn-75, Asn-96, Asn-147, Asn-171, Asn-184, Asn-218, and Asn-253. A run of 18 repeats spans residues 198–232 (GTIT…IPTA), 233–267 (GTVT…IPTA), 268–302 (GTRT…LPTA), 303–337 (GTNT…YPTA), 338–372 (GMVT…IPTA), 373–407 (GTVT…IPTA), 408–442 (GTRT…LPTA), 443–477 (GTNT…EPTA), 478–512 (GVVT…EPTA), 513–547 (GVVT…EPTA), 548–582 (GVVT…EPTA), 583–617 (GVVT…EPTA), 618–652 (GVVT…EPTA), 653–687 (GVVT…EPTA), 688–722 (GVVT…EPTA), 723–757 (GVVT…EPTA), 758–792 (GVVT…EPTA), and 793–828 (GYVT…VPSL). The tract at residues 198 to 828 (GTITLTTISG…GTVLQVVPSL (631 aa)) is 18 X 35 AA approximate tandem repeats. 2 N-linked (GlcNAc...) asparagine glycosylation sites follow: Asn-352 and Asn-393. One can recognise a DIPSY domain in the interval 820 to 973 (TVLQVVPSLF…SNVYFKAVPL (154 aa)). N-linked (GlcNAc...) asparagine glycosylation is present at Asn-848.

This sequence belongs to the mam3/map4 family.

Its subcellular location is the cell surface. May be involved in agglutination during conjugation or other aspects of colony formation. Induces flocculation when overexpressed. The protein is Putative cell agglutination protein pfl3 of Schizosaccharomyces pombe (strain 972 / ATCC 24843) (Fission yeast).